A 407-amino-acid chain; its full sequence is O-methyltransferase verK (407 aa).

Residues E263 and 295 to 297 each bind S-adenosyl-L-methionine; that span reads GDF. Residue H314 is the Proton acceptor of the active site.

This sequence belongs to the class I-like SAM-binding methyltransferase superfamily. Cation-independent O-methyltransferase family.

The protein operates within mycotoxin biosynthesis. Functionally, O-methyltransferase; part of the gene cluster that mediates the biosynthesis of 11'-deoxyverticillin A, one of the dimeric epipolythiodioxopiperazines (ETPs) from the verticillin family that act as mycotoxins. 11'-deoxyverticillin A is required for normal conidiation. The nonribosomal peptide synthetase verP is speculated to be responsible for condensation of amino acids to form the carbon skeleton of verticillin, whereas the cluster-specific tailoring enzymes are involved in further modifications leading to the production of 11'-deoxyverticillin A. In Clonostachys rogersoniana, this protein is O-methyltransferase verK.